The following is a 1578-amino-acid chain: Chitinase ChiA (1578 aa).

The first 19 residues, 1–19, serve as a signal peptide directing secretion; it reads MKHYYRLLFLLLFPLLASA. A GH18 1 domain is found at 25–466; sequence KKVVGYYAQW…NQVDTSFGSV (442 aa). The interval 26 to 446 is GH18N; sequence KVVGYYAQWS…GGMIWELSQD (421 aa). Chitin contacts are provided by residues 92-93 and 119-122; these read DA and GGWT. Glutamate 162 serves as the catalytic Proton donor. Chitin is bound by residues tyrosine 163, 249–252, and tryptophan 441; that span reads FGYD. One can recognise a CNA-B domain in the interval 485 to 536; that stretch reads TDVTVELRNASNAVIQTVVSANGNFAFNNLTSGQNYSLTALKATYTFTPVTL. Residues 1142–1462 are GH18C; sequence KIILGYAHSW…GLMTWSVNWD (321 aa). Residues 1142–1483 form the GH18 2 domain; that stretch reads KIILGYAHSW…KAYAAYFASQ (342 aa). Residue glutamate 1264 is the Proton donor of the active site. The tract at residues 1473–1578 is CTD; sequence SKAYAAYFAS…KSFKVMNFLN (106 aa).

It belongs to the glycosyl hydrolase 18 family. Chitinase class II subfamily.

It localises to the secreted. The catalysed reaction is Random endo-hydrolysis of N-acetyl-beta-D-glucosaminide (1-&gt;4)-beta-linkages in chitin and chitodextrins.. Major extracellular chitinase, which is essential for chitin utilization. This is Chitinase ChiA (chiA) from Flavobacterium johnsoniae (strain ATCC 17061 / DSM 2064 / JCM 8514 / BCRC 14874 / CCUG 350202 / NBRC 14942 / NCIMB 11054 / UW101) (Cytophaga johnsonae).